A 168-amino-acid polypeptide reads, in one-letter code: Protein A40 (168 aa).

The Cytoplasmic segment spans residues 1–9 (MNKPKTDYA). A helical; Signal-anchor for type II membrane protein membrane pass occupies residues 10-30 (GYACCVICGLIVGIIFTATLL). Residues 31–168 (KVVERKLVHT…TTFLSYHYFG (138 aa)) lie on the Extracellular side of the membrane. One can recognise a C-type lectin domain in the interval 63 to 168 (YNNKCIHLST…TTFLSYHYFG (106 aa)).

Belongs to the poxviridae A40 protein family.

It is found in the host membrane. The chain is Protein A40 from Homo sapiens (Human).